The chain runs to 2419 residues: Telomere-associated protein RIF1 (2419 aa).

2 disordered regions span residues 1 to 24 (MTAP…VPPG) and 373 to 408 (SIPS…SPRG). A compositionally biased stretch (polar residues) spans 373–385 (SIPSPQGNSSRGS). 5 positions are modified to phosphoserine: Ser385, Ser391, Ser779, Ser976, and Ser1005. The residue at position 1044 (Thr1044) is a Phosphothreonine. Positions 1184–1198 (SSSTETSVVSSSSVS) are enriched in low complexity. 2 disordered regions span residues 1184-1594 (SSST…QAVP) and 1613-1637 (RVIL…EKSK). 2 stretches are compositionally biased toward polar residues: residues 1199–1217 (NATF…QTFI) and 1228–1255 (RPFS…TNTD). Thr1215 is subject to Phosphothreonine. A phosphoserine mark is found at Ser1231 and Ser1233. Basic and acidic residues predominate over residues 1263 to 1272 (REVTNSKSDS). Residues 1289 to 1302 (AEQSVTKKSKPSLT) show a composition bias toward polar residues. Positions 1323-1345 (HVSENDDHPSEATLEHKDGDPKP) are enriched in basic and acidic residues. Residues Ser1407, Ser1439, Ser1457, and Ser1498 each carry the phosphoserine modification. The span at 1416–1455 (SQERESGQQKKERRKEEEKIISKSPLRIKDDKLPTQKLTD) shows a compositional bias: basic and acidic residues. A compositionally biased stretch (polar residues) spans 1457–1467 (SPIQENLTEKG). Phosphothreonine is present on Thr1504. A compositionally biased stretch (basic and acidic residues) spans 1507 to 1516 (NLDKSSEKPL). Residues 1525-1537 (RRASQGLISAVEN) are compositionally biased toward polar residues. Phosphoserine is present on residues Ser1528, Ser1538, Ser1540, Ser1542, and Ser1550. Positions 1551–1560 (RKKRSGKWKN) are enriched in basic residues. A phosphoserine mark is found at Ser1562 and Ser1565. Residues 1572–1581 (EEKKAEEEVM) are compositionally biased toward basic and acidic residues. Phosphoserine is present on residues Ser1680 and Ser1683. Position 1780 is a phosphothreonine (Thr1780). Ser1784 bears the Phosphoserine mark. The segment at 1812–1836 (ASEAVSEIQGPCSENHSPAEDPGLS) is disordered. Position 1842 is a phosphoserine (Ser1842). An interaction with condensed chromosomes in telophase region spans residues 1882–2419 (DAFVAADSEK…RWRSPAHENS (538 aa)). Disordered stretches follow at residues 1890–1914 (EKST…ECEA) and 1929–1983 (FNSG…AQMS). Phosphoserine occurs at positions 1931, 2094, 2109, 2121, 2125, 2144, 2153, 2208, 2287, 2341, 2413, and 2419. Residues 2119 to 2394 (VWSPLASPST…TGSQLFEMHE (276 aa)) form an interaction with ERCC6 region. The disordered stretch occupies residues 2182-2212 (SPIIKSVKTSPTSHSKHNTTSAKGFLSPGSQ). The span at 2189–2212 (KTSPTSHSKHNTTSAKGFLSPGSQ) shows a compositional bias: polar residues.

The protein belongs to the RIF1 family. In terms of assembly, interacts with TP53BP1 (when phosphorylated by ATM). May interact with TRF2. Interacts with SHLD2. Interacts with ERCC6 (via WHD region). Interacts with ASTE1. As to expression, expressed in Sertoli cells, prospermatagonia, early primary spermatocytes, and in oocytes at all stages of their growth. Expressed in embryonic stem (ES) and embryonic germ (EG) cells: expression is lost upon differentiation.

Its subcellular location is the nucleus. The protein localises to the chromosome. It is found in the telomere. It localises to the cytoplasm. The protein resides in the cytoskeleton. Its subcellular location is the spindle. In terms of biological role, key regulator of TP53BP1 that plays a key role in the repair of double-strand DNA breaks (DSBs) in response to DNA damage: acts by promoting non-homologous end joining (NHEJ)-mediated repair of DSBs. In response to DNA damage, interacts with ATM-phosphorylated TP53BP1. Interaction with TP53BP1 leads to dissociate the interaction between NUDT16L1/TIRR and TP53BP1, thereby unmasking the tandem Tudor-like domain of TP53BP1 and allowing recruitment to DNA DSBs. Once recruited to DSBs, RIF1 and TP53BP1 act by promoting NHEJ-mediated repair of DSBs. In the same time, RIF1 and TP53BP1 specifically counteract the function of BRCA1 by blocking DSBs resection via homologous recombination (HR) during G1 phase. Also required for immunoglobulin class-switch recombination (CSR) during antibody genesis, a process that involves the generation of DNA DSBs. Promotes NHEJ of dysfunctional telomeres. This chain is Telomere-associated protein RIF1, found in Mus musculus (Mouse).